The following is a 657-amino-acid chain: Regulator of MON1-CCZ1 complex (657 aa).

Residues 471-637 form the Mic1 domain; that stretch reads KKEMPHKFVI…NFTPGEHCEE (167 aa).

This sequence belongs to the RMC1 family. As to quaternary structure, found in a complex with RMC1, CCZ1 MON1A and MON1B.

Its subcellular location is the lysosome membrane. The protein resides in the late endosome membrane. Functionally, component of the CCZ1-MON1 RAB7A guanine exchange factor (GEF). Acts as a positive regulator of CCZ1-MON1A/B function necessary for endosomal/autophagic flux and efficient RAB7A localization. The chain is Regulator of MON1-CCZ1 complex from Homo sapiens (Human).